We begin with the raw amino-acid sequence, 237 residues long: Phosphoribosylaminoimidazole-succinocarboxamide synthase (237 aa).

Belongs to the SAICAR synthetase family.

The catalysed reaction is 5-amino-1-(5-phospho-D-ribosyl)imidazole-4-carboxylate + L-aspartate + ATP = (2S)-2-[5-amino-1-(5-phospho-beta-D-ribosyl)imidazole-4-carboxamido]succinate + ADP + phosphate + 2 H(+). Its pathway is purine metabolism; IMP biosynthesis via de novo pathway; 5-amino-1-(5-phospho-D-ribosyl)imidazole-4-carboxamide from 5-amino-1-(5-phospho-D-ribosyl)imidazole-4-carboxylate: step 1/2. This is Phosphoribosylaminoimidazole-succinocarboxamide synthase from Methanosarcina mazei (strain ATCC BAA-159 / DSM 3647 / Goe1 / Go1 / JCM 11833 / OCM 88) (Methanosarcina frisia).